The chain runs to 747 residues: Catalase-peroxidase 1 (747 aa).

A compositionally biased stretch (basic and acidic residues) spans 1-22; that stretch reads MTDTSDARPPHSDDKTRSHSES. The segment at 1 to 39 is disordered; it reads MTDTSDARPPHSDDKTRSHSESENPAIDSPEPKVHAPLT. Residues 112–240 constitute a cross-link (tryptophyl-tyrosyl-methioninium (Trp-Tyr) (with M-266)); sequence WHAAGTYRIF…FGATTMGLIY (129 aa). Catalysis depends on His113, which acts as the Proton acceptor. Positions 240–266 form a cross-link, tryptophyl-tyrosyl-methioninium (Tyr-Met) (with W-112); it reads YVNPEGPEGKPDPLAAAHDIRETFGRM. Residue His281 participates in heme b binding.

The protein belongs to the peroxidase family. Peroxidase/catalase subfamily. As to quaternary structure, homodimer or homotetramer. The cofactor is heme b. Formation of the three residue Trp-Tyr-Met cross-link is important for the catalase, but not the peroxidase activity of the enzyme.

It catalyses the reaction H2O2 + AH2 = A + 2 H2O. It carries out the reaction 2 H2O2 = O2 + 2 H2O. Bifunctional enzyme with both catalase and broad-spectrum peroxidase activity. The chain is Catalase-peroxidase 1 from Mycolicibacterium vanbaalenii (strain DSM 7251 / JCM 13017 / BCRC 16820 / KCTC 9966 / NRRL B-24157 / PYR-1) (Mycobacterium vanbaalenii).